The chain runs to 143 residues: Large ribosomal subunit protein uL13c (143 aa).

This sequence belongs to the universal ribosomal protein uL13 family. In terms of assembly, part of the 50S ribosomal subunit.

It is found in the plastid. The protein resides in the chloroplast. The sequence is that of Large ribosomal subunit protein uL13c from Gracilaria tenuistipitata var. liui (Red alga).